The sequence spans 577 residues: Arginine--tRNA ligase (577 aa).

A 'HIGH' region motif is present at residues 122-132 (PNVAKEMHVGH).

The protein belongs to the class-I aminoacyl-tRNA synthetase family. As to quaternary structure, monomer.

The protein resides in the cytoplasm. The enzyme catalyses tRNA(Arg) + L-arginine + ATP = L-arginyl-tRNA(Arg) + AMP + diphosphate. The protein is Arginine--tRNA ligase of Vibrio parahaemolyticus serotype O3:K6 (strain RIMD 2210633).